We begin with the raw amino-acid sequence, 180 residues long: Large ribosomal subunit protein uL6 (180 aa).

It belongs to the universal ribosomal protein uL6 family. In terms of assembly, part of the 50S ribosomal subunit.

In terms of biological role, this protein binds to the 23S rRNA, and is important in its secondary structure. It is located near the subunit interface in the base of the L7/L12 stalk, and near the tRNA binding site of the peptidyltransferase center. The sequence is that of Large ribosomal subunit protein uL6 from Lachnoclostridium phytofermentans (strain ATCC 700394 / DSM 18823 / ISDg) (Clostridium phytofermentans).